Reading from the N-terminus, the 516-residue chain is Putative protein NRT1/ PTR FAMILY 2.2 (516 aa).

11 helical membrane-spanning segments follow: residues 31–51 (TLLG…VFLI), 67–87 (IVNG…DSFF), 90–110 (IPVI…LTMI), 138–158 (ILYI…FTLA), 174–194 (FFNW…TAIV), 201–221 (SWKL…IVFV), 320–340 (LLLA…LIIL), 362–382 (VIVI…VYPM), 394–414 (LQKV…SAIV), 437–457 (FIAS…ITLI), and 476–496 (VYWL…AWFY).

This sequence belongs to the major facilitator superfamily. Proton-dependent oligopeptide transporter (POT/PTR) (TC 2.A.17) family. In terms of tissue distribution, not detected.

It localises to the membrane. Transporter involved in a passive nitrate efflux. This chain is Putative protein NRT1/ PTR FAMILY 2.2 (NPF2.2), found in Arabidopsis thaliana (Mouse-ear cress).